The sequence spans 353 residues: Putative 3-oxoacyl-[acyl-carrier-protein] synthase 3 (353 aa).

Catalysis depends on residues Cys122, His268, and Asn299.

Belongs to the thiolase-like superfamily. FabH family. Homodimer.

The protein localises to the cytoplasm. It catalyses the reaction malonyl-[ACP] + acetyl-CoA + H(+) = 3-oxobutanoyl-[ACP] + CO2 + CoA. Its pathway is lipid metabolism; fatty acid biosynthesis. May catalyze the condensation reaction of fatty acid synthesis by the addition to an acyl acceptor of two carbons from malonyl-ACP. The sequence is that of Putative 3-oxoacyl-[acyl-carrier-protein] synthase 3 from Campylobacter jejuni subsp. jejuni serotype O:2 (strain ATCC 700819 / NCTC 11168).